We begin with the raw amino-acid sequence, 235 residues long: Ubiquinone biosynthesis O-methyltransferase (235 aa).

4 residues coordinate S-adenosyl-L-methionine: R39, G59, D80, and M124.

The protein belongs to the methyltransferase superfamily. UbiG/COQ3 family.

The enzyme catalyses a 3-demethylubiquinol + S-adenosyl-L-methionine = a ubiquinol + S-adenosyl-L-homocysteine + H(+). It catalyses the reaction a 3-(all-trans-polyprenyl)benzene-1,2-diol + S-adenosyl-L-methionine = a 2-methoxy-6-(all-trans-polyprenyl)phenol + S-adenosyl-L-homocysteine + H(+). It functions in the pathway cofactor biosynthesis; ubiquinone biosynthesis. O-methyltransferase that catalyzes the 2 O-methylation steps in the ubiquinone biosynthetic pathway. In Vibrio parahaemolyticus serotype O3:K6 (strain RIMD 2210633), this protein is Ubiquinone biosynthesis O-methyltransferase.